The sequence spans 558 residues: Hsp70-Hsp90 organizing protein 3 (558 aa).

TPR repeat units follow at residues 2 to 35, 37 to 69, 70 to 103, and 136 to 173; these read AEEA…SPTN, ILYS…KPDW, SKGY…DPSN, and EKLT…YMKD. The 40-residue stretch at 131–170 folds into the STI1 1 domain; the sequence is GKEMWEKLTADPGTRVYLEQDDFVKTMKEIQRNPNNLNLY. Residues 191–232 are disordered; it reads SSGEDTEMKEADERKEPEPEMEPMELTEEERQKKERKEKALK. Basic and acidic residues predominate over residues 196–208; the sequence is TEMKEADERKEPE. The segment covering 209 to 218 has biased composition (acidic residues); sequence PEMEPMELTE. Over residues 219 to 232 the composition is skewed to basic and acidic residues; that stretch reads EERQKKERKEKALK. The Bipartite nuclear localization signal motif lies at 227–244; sequence KEKALKEKGEGNVAYKKK. 6 TPR repeats span residues 230 to 263, 265 to 297, 305 to 342, 369 to 402, 404 to 436, and 437 to 470; these read ALKE…DDED, SYLT…GREL, ARAL…HRNP, AEEE…NPND, RAYS…DPSF, and TKGY…DPKN. The 40-residue stretch at 507 to 546 folds into the STI1 2 domain; the sequence is DPEVQNILSDPVMRQVLVDFQENPKAAQEHMKNPMVMNKI.

As to quaternary structure, co-chaperone that forms a complex with HSP70 and HSP90 and preproteins (e.g. chloroplast preproteins). In terms of processing, phosphorylated. Post-translationally, acetylated.

It is found in the cytoplasm. It localises to the nucleus. Its function is as follows. Mediates the association of the molecular chaperones HSP70 and HSP90. Mediates nuclear encoded chloroplast preproteins binding to HSP90 prior to chloroplastic sorting. Involved in acclimation to heat. This Arabidopsis thaliana (Mouse-ear cress) protein is Hsp70-Hsp90 organizing protein 3 (HOP3).